The following is a 165-amino-acid chain: Transmembrane protein 128 (165 aa).

The next 4 membrane-spanning stretches (helical) occupy residues 49–69 (NIHS…VDFF), 81–101 (WFLC…YCIV), 119–139 (LIPI…IALW), and 144–164 (FFTP…ITLL).

It is found in the membrane. In Homo sapiens (Human), this protein is Transmembrane protein 128 (TMEM128).